We begin with the raw amino-acid sequence, 349 residues long: Probable esterase Cgl0839 (349 aa).

The 270-residue stretch at 60 to 329 (GTHQTWFQQY…EDIAGHLGLF (270 aa)) folds into the AB hydrolase-1 domain. S142 serves as the catalytic Nucleophile. Catalysis depends on residues D296 and H325.

It belongs to the AB hydrolase superfamily. Acetyl esterase family. As to quaternary structure, homodimer.

Its function is as follows. Esterase that catalyzes the hydrolysis of 4-nitrophenyl acetate in vitro. This Corynebacterium glutamicum (strain ATCC 13032 / DSM 20300 / JCM 1318 / BCRC 11384 / CCUG 27702 / LMG 3730 / NBRC 12168 / NCIMB 10025 / NRRL B-2784 / 534) protein is Probable esterase Cgl0839.